Consider the following 1113-residue polypeptide: uncharacterized protein (1113 aa).

313 to 320 (GPPGTGKS) is an ATP binding site.

This sequence belongs to the DNA2/NAM7 helicase family.

This is an uncharacterized protein from Mycoplasma genitalium (strain ATCC 33530 / DSM 19775 / NCTC 10195 / G37) (Mycoplasmoides genitalium).